Reading from the N-terminus, the 30-residue chain is Snaclec coagulation factor IX/factor X-binding protein subunit B (30 aa).

Cys2 and Cys13 form a disulfide bridge. Residues Tyr9–Cys30 enclose the C-type lectin domain.

This sequence belongs to the snaclec family. In terms of assembly, heterodimer of subunits A and B; disulfide-linked. In terms of processing, glycosylated. In terms of tissue distribution, expressed by the venom gland.

It localises to the secreted. Its function is as follows. Anticoagulant protein which binds to the gamma-carboxyglutamic acid-domain regions of factors IX (F9) and factor X (F10) in the presence of calcium with a 1 to 1 stoichiometry. The polypeptide is Snaclec coagulation factor IX/factor X-binding protein subunit B (Bothrops jararaca (Jararaca)).